A 190-amino-acid polypeptide reads, in one-letter code: Elongation factor P-like protein (190 aa).

This sequence belongs to the elongation factor P family.

The polypeptide is Elongation factor P-like protein (Klebsiella pneumoniae subsp. pneumoniae (strain ATCC 700721 / MGH 78578)).